The sequence spans 103 residues: Small ribosomal subunit protein bS18c (103 aa).

This sequence belongs to the bacterial ribosomal protein bS18 family. As to quaternary structure, part of the 30S ribosomal subunit.

The protein localises to the plastid. It is found in the chloroplast. This chain is Small ribosomal subunit protein bS18c (rps18), found in Chlorella vulgaris (Green alga).